The sequence spans 449 residues: UDP-N-acetylmuramate--L-alanine ligase (449 aa).

ATP is bound at residue 121–127 (GAHGKSS).

This sequence belongs to the MurCDEF family.

It localises to the cytoplasm. It catalyses the reaction UDP-N-acetyl-alpha-D-muramate + L-alanine + ATP = UDP-N-acetyl-alpha-D-muramoyl-L-alanine + ADP + phosphate + H(+). The protein operates within cell wall biogenesis; peptidoglycan biosynthesis. Its function is as follows. Cell wall formation. This Helicobacter pylori (strain HPAG1) protein is UDP-N-acetylmuramate--L-alanine ligase.